Reading from the N-terminus, the 91-residue chain is UPF0213 protein NMC1807 (91 aa).

The GIY-YIG domain occupies Ser4–Gln83.

The protein belongs to the UPF0213 family.

The protein is UPF0213 protein NMC1807 of Neisseria meningitidis serogroup C / serotype 2a (strain ATCC 700532 / DSM 15464 / FAM18).